We begin with the raw amino-acid sequence, 94 residues long: Large ribosomal subunit protein uL23 (94 aa).

The protein belongs to the universal ribosomal protein uL23 family. Part of the 50S ribosomal subunit. Contacts protein L29, and trigger factor when it is bound to the ribosome.

In terms of biological role, one of the early assembly proteins it binds 23S rRNA. One of the proteins that surrounds the polypeptide exit tunnel on the outside of the ribosome. Forms the main docking site for trigger factor binding to the ribosome. The polypeptide is Large ribosomal subunit protein uL23 (Akkermansia muciniphila (strain ATCC BAA-835 / DSM 22959 / JCM 33894 / BCRC 81048 / CCUG 64013 / CIP 107961 / Muc)).